The following is a 405-amino-acid chain: Bestrophin homolog 14 (405 aa).

4 helical membrane-spanning segments follow: residues 28 to 48 (LIGF…LLDE), 63 to 83 (IGAQ…LIVA), 223 to 243 (LVYT…CLIG), and 256 to 276 (EITI…LGWL).

This sequence belongs to the anion channel-forming bestrophin (TC 1.A.46) family. Calcium-sensitive chloride channel subfamily.

It localises to the membrane. The sequence is that of Bestrophin homolog 14 (best-14) from Caenorhabditis elegans.